The chain runs to 555 residues: Dihydroxy-acid dehydratase (555 aa).

D78 serves as a coordination point for Mg(2+). Residue C119 participates in [2Fe-2S] cluster binding. Residues D120 and K121 each coordinate Mg(2+). K121 carries the post-translational modification N6-carboxylysine. A [2Fe-2S] cluster-binding site is contributed by C191. Residue E444 coordinates Mg(2+). The active-site Proton acceptor is the S470.

This sequence belongs to the IlvD/Edd family. In terms of assembly, homodimer. [2Fe-2S] cluster serves as cofactor. Requires Mg(2+) as cofactor.

The catalysed reaction is (2R)-2,3-dihydroxy-3-methylbutanoate = 3-methyl-2-oxobutanoate + H2O. The enzyme catalyses (2R,3R)-2,3-dihydroxy-3-methylpentanoate = (S)-3-methyl-2-oxopentanoate + H2O. The protein operates within amino-acid biosynthesis; L-isoleucine biosynthesis; L-isoleucine from 2-oxobutanoate: step 3/4. Its pathway is amino-acid biosynthesis; L-valine biosynthesis; L-valine from pyruvate: step 3/4. Its function is as follows. Functions in the biosynthesis of branched-chain amino acids. Catalyzes the dehydration of (2R,3R)-2,3-dihydroxy-3-methylpentanoate (2,3-dihydroxy-3-methylvalerate) into 2-oxo-3-methylpentanoate (2-oxo-3-methylvalerate) and of (2R)-2,3-dihydroxy-3-methylbutanoate (2,3-dihydroxyisovalerate) into 2-oxo-3-methylbutanoate (2-oxoisovalerate), the penultimate precursor to L-isoleucine and L-valine, respectively. The sequence is that of Dihydroxy-acid dehydratase from Nitratidesulfovibrio vulgaris (strain DSM 19637 / Miyazaki F) (Desulfovibrio vulgaris).